Consider the following 322-residue polypeptide: Lipoyl synthase (322 aa).

7 residues coordinate [4Fe-4S] cluster: Cys-69, Cys-74, Cys-80, Cys-95, Cys-99, Cys-102, and Ser-309. The region spanning 81-298 (FNHGTATFMI…KEIALELGFT (218 aa)) is the Radical SAM core domain.

It belongs to the radical SAM superfamily. Lipoyl synthase family. The cofactor is [4Fe-4S] cluster.

Its subcellular location is the cytoplasm. It catalyses the reaction [[Fe-S] cluster scaffold protein carrying a second [4Fe-4S](2+) cluster] + N(6)-octanoyl-L-lysyl-[protein] + 2 oxidized [2Fe-2S]-[ferredoxin] + 2 S-adenosyl-L-methionine + 4 H(+) = [[Fe-S] cluster scaffold protein] + N(6)-[(R)-dihydrolipoyl]-L-lysyl-[protein] + 4 Fe(3+) + 2 hydrogen sulfide + 2 5'-deoxyadenosine + 2 L-methionine + 2 reduced [2Fe-2S]-[ferredoxin]. It participates in protein modification; protein lipoylation via endogenous pathway; protein N(6)-(lipoyl)lysine from octanoyl-[acyl-carrier-protein]: step 2/2. In terms of biological role, catalyzes the radical-mediated insertion of two sulfur atoms into the C-6 and C-8 positions of the octanoyl moiety bound to the lipoyl domains of lipoate-dependent enzymes, thereby converting the octanoylated domains into lipoylated derivatives. The chain is Lipoyl synthase from Photobacterium profundum (strain SS9).